The sequence spans 297 residues: Ribosomal RNA small subunit methyltransferase A (297 aa).

S-adenosyl-L-methionine is bound by residues asparagine 28, leucine 30, glycine 55, glutamate 76, aspartate 101, and asparagine 126.

It belongs to the class I-like SAM-binding methyltransferase superfamily. rRNA adenine N(6)-methyltransferase family. RsmA subfamily.

It localises to the cytoplasm. It carries out the reaction adenosine(1518)/adenosine(1519) in 16S rRNA + 4 S-adenosyl-L-methionine = N(6)-dimethyladenosine(1518)/N(6)-dimethyladenosine(1519) in 16S rRNA + 4 S-adenosyl-L-homocysteine + 4 H(+). Specifically dimethylates two adjacent adenosines (A1518 and A1519) in the loop of a conserved hairpin near the 3'-end of 16S rRNA in the 30S particle. May play a critical role in biogenesis of 30S subunits. This chain is Ribosomal RNA small subunit methyltransferase A, found in Latilactobacillus sakei subsp. sakei (strain 23K) (Lactobacillus sakei subsp. sakei).